Consider the following 107-residue polypeptide: Sperm-specific class P protein 31 (107 aa).

The MSP domain occupies Met-1 to Ser-107.

Expressed at higher level in testis.

The sequence is that of Sperm-specific class P protein 31 (ssp-31) from Caenorhabditis elegans.